The primary structure comprises 477 residues: Mannitol 2-dehydrogenase (477 aa).

An NAD(+)-binding site is contributed by 19–30 (IVHIGVGNFHRA).

This sequence belongs to the mannitol dehydrogenase family. Monomer.

The catalysed reaction is D-mannitol + NAD(+) = D-fructose + NADH + H(+). The chain is Mannitol 2-dehydrogenase (mtlK) from Cereibacter sphaeroides (Rhodobacter sphaeroides).